The primary structure comprises 472 residues: MGKKEMIMVKGIPKIMLLISITFLLLSLINCNVLVNSRGTRRSWPYTVLSYRGKEILKKQKEDILKRLMSTSSDGYRFLMYPSQQKFHAIVISMDKFPQDYILAGPIRNDSITHMWFDFYSTQLRKPAKYVYSEYNHTAHKITLRPPPCGTVPSMNCLSEMLNVSKRNDTGEKGCGNFTTFNPMFFNVPRWNTKLYIGSNKVNVDSQTIYFLGLTALLLRYAQRNCTRSFYLVNAMSRNLFRVPKYINGTKLKNTMRKLKRKQALVKEQPQKKNKKSQSTTTPYLSYTTSTAFNVTTNVTYSATAAVTRVATSTTGYRPDSNFMKSIMATQLRDLATWVYTTLRYRNEPFCKPDRNRTAVSEFMKNTHVLIRNETPYTIYGTLDMSSLYYNETMSVENETASDNNETTPTSPSTRFQRTFIDPLWDYLDSLLFLDKIRNFSLQLPAYGNLTPPEHRRAANLSTLNSLWWWSQ.

The signal sequence occupies residues 1–31 (MGKKEMIMVKGIPKIMLLISITFLLLSLINC). Residues asparagine 109, asparagine 136, asparagine 163, asparagine 168, asparagine 177, asparagine 225, asparagine 248, asparagine 294, asparagine 298, asparagine 356, asparagine 391, asparagine 398, asparagine 405, asparagine 439, and asparagine 460 are each glycosylated (N-linked (GlcNAc...) asparagine; by host).

Belongs to the herpesviridae U47 family. As to quaternary structure, forms the envelope trimer complex composed of gH, gL, and gO. The trimer interacts with host PDGFRA. Post-translationally, N-glycosylated. The N-terminus is blocked.

Its subcellular location is the virion membrane. Its function is as follows. Plays a role in viral entry into host cells. Forms a trimeric complex at the surface of the viral envelope together with gH and gL. This complex is required for entry in host fibroblasts. Mechanistically, engages host receptor(s) including PDGFRA to mediate infection. The sequence is that of Envelope glycoprotein O (UL74) from Human cytomegalovirus (strain Merlin) (HHV-5).